A 449-amino-acid chain; its full sequence is Gamma-glutamyl phosphate reductase (449 aa).

This sequence belongs to the gamma-glutamyl phosphate reductase family.

The protein resides in the cytoplasm. It catalyses the reaction L-glutamate 5-semialdehyde + phosphate + NADP(+) = L-glutamyl 5-phosphate + NADPH + H(+). It participates in amino-acid biosynthesis; L-proline biosynthesis; L-glutamate 5-semialdehyde from L-glutamate: step 2/2. Functionally, catalyzes the NADPH-dependent reduction of L-glutamate 5-phosphate into L-glutamate 5-semialdehyde and phosphate. The product spontaneously undergoes cyclization to form 1-pyrroline-5-carboxylate. The sequence is that of Gamma-glutamyl phosphate reductase from Methanococcoides burtonii (strain DSM 6242 / NBRC 107633 / OCM 468 / ACE-M).